Here is a 206-residue protein sequence, read N- to C-terminus: CBS domain-containing protein CBSX3, mitochondrial (206 aa).

The N-terminal 39 residues, 1 to 39, are a transit peptide targeting the mitochondrion; it reads MQGVIRSFVSGGNVVKGSVLQHLRVINPAIQPSVFCSRS. CBS domains lie at 61-127 and 136-194; these read MKSK…GRSS and MTEE…HREE.

The protein localises to the mitochondrion. This is CBS domain-containing protein CBSX3, mitochondrial (CBSX3) from Arabidopsis thaliana (Mouse-ear cress).